Consider the following 364-residue polypeptide: Uroporphyrinogen decarboxylase (364 aa).

Residues 28–32 (RQAGR), D78, Y160, T215, and H333 contribute to the substrate site.

Belongs to the uroporphyrinogen decarboxylase family. In terms of assembly, homodimer.

The protein localises to the cytoplasm. The catalysed reaction is uroporphyrinogen III + 4 H(+) = coproporphyrinogen III + 4 CO2. The protein operates within porphyrin-containing compound metabolism; protoporphyrin-IX biosynthesis; coproporphyrinogen-III from 5-aminolevulinate: step 4/4. In terms of biological role, catalyzes the decarboxylation of four acetate groups of uroporphyrinogen-III to yield coproporphyrinogen-III. This Burkholderia thailandensis (strain ATCC 700388 / DSM 13276 / CCUG 48851 / CIP 106301 / E264) protein is Uroporphyrinogen decarboxylase.